Reading from the N-terminus, the 35-residue chain is Potassium channel toxin alpha-KTx 6.12 (35 aa).

Gln1 carries the post-translational modification Pyrrolidone carboxylic acid. 4 cysteine pairs are disulfide-bonded: Cys4–Cys24, Cys10–Cys29, Cys14–Cys31, and Cys19–Cys34. Lys35 carries the post-translational modification Lysine amide.

This sequence belongs to the short scorpion toxin superfamily. Potassium channel inhibitor family. Alpha-KTx 06 subfamily. As to quaternary structure, monomer. In terms of tissue distribution, expressed by the venom gland.

It localises to the secreted. Its function is as follows. High affinity blocker of Kv1.3/KCNA3 channels of human T cells. Blocks Kv1.2/KCNA2 with an order of magnitude smaller than for Kv1.3/KCNA3. This chain is Potassium channel toxin alpha-KTx 6.12, found in Anuroctonus phaiodactylus (Mafia scorpion).